We begin with the raw amino-acid sequence, 938 residues long: Isoleucine--tRNA ligase (938 aa).

A 'HIGH' region motif is present at residues 58–68 (PYANGNIHIGH). An L-isoleucyl-5'-AMP-binding site is contributed by Glu562. Residues 603–607 (KMSKS) carry the 'KMSKS' region motif. Lys606 contributes to the ATP binding site. 4 residues coordinate Zn(2+): Cys901, Cys904, Cys921, and Cys924.

Belongs to the class-I aminoacyl-tRNA synthetase family. IleS type 1 subfamily. In terms of assembly, monomer. Zn(2+) is required as a cofactor.

The protein resides in the cytoplasm. The catalysed reaction is tRNA(Ile) + L-isoleucine + ATP = L-isoleucyl-tRNA(Ile) + AMP + diphosphate. Functionally, catalyzes the attachment of isoleucine to tRNA(Ile). As IleRS can inadvertently accommodate and process structurally similar amino acids such as valine, to avoid such errors it has two additional distinct tRNA(Ile)-dependent editing activities. One activity is designated as 'pretransfer' editing and involves the hydrolysis of activated Val-AMP. The other activity is designated 'posttransfer' editing and involves deacylation of mischarged Val-tRNA(Ile). In Actinobacillus pleuropneumoniae serotype 5b (strain L20), this protein is Isoleucine--tRNA ligase.